A 254-amino-acid chain; its full sequence is 4-hydroxy-tetrahydrodipicolinate reductase (254 aa).

NAD(+) contacts are provided by residues 8–13 (GASGKM), 87–89 (GTT), and 111–114 (ATNM). Catalysis depends on histidine 143, which acts as the Proton donor/acceptor. A (S)-2,3,4,5-tetrahydrodipicolinate-binding site is contributed by histidine 144. Residue lysine 147 is the Proton donor of the active site. 153–154 (GT) serves as a coordination point for (S)-2,3,4,5-tetrahydrodipicolinate.

This sequence belongs to the DapB family.

It localises to the cytoplasm. The enzyme catalyses (S)-2,3,4,5-tetrahydrodipicolinate + NAD(+) + H2O = (2S,4S)-4-hydroxy-2,3,4,5-tetrahydrodipicolinate + NADH + H(+). It carries out the reaction (S)-2,3,4,5-tetrahydrodipicolinate + NADP(+) + H2O = (2S,4S)-4-hydroxy-2,3,4,5-tetrahydrodipicolinate + NADPH + H(+). It participates in amino-acid biosynthesis; L-lysine biosynthesis via DAP pathway; (S)-tetrahydrodipicolinate from L-aspartate: step 4/4. In terms of biological role, catalyzes the conversion of 4-hydroxy-tetrahydrodipicolinate (HTPA) to tetrahydrodipicolinate. This is 4-hydroxy-tetrahydrodipicolinate reductase from Campylobacter curvus (strain 525.92).